Reading from the N-terminus, the 635-residue chain is Threonine--tRNA ligase (635 aa).

One can recognise a TGS domain in the interval 1–61 (MIKITLKDGK…HKDSSLEILT (61 aa)). The catalytic stretch occupies residues 242-532 (DHRKLGKELD…LIEQYAGAFP (291 aa)). Residues C333, H384, and H509 each contribute to the Zn(2+) site.

The protein belongs to the class-II aminoacyl-tRNA synthetase family. Homodimer. It depends on Zn(2+) as a cofactor.

The protein localises to the cytoplasm. The catalysed reaction is tRNA(Thr) + L-threonine + ATP = L-threonyl-tRNA(Thr) + AMP + diphosphate + H(+). Catalyzes the attachment of threonine to tRNA(Thr) in a two-step reaction: L-threonine is first activated by ATP to form Thr-AMP and then transferred to the acceptor end of tRNA(Thr). Also edits incorrectly charged L-seryl-tRNA(Thr). The chain is Threonine--tRNA ligase from Clostridium botulinum (strain Okra / Type B1).